Reading from the N-terminus, the 93-residue chain is Small ribosomal subunit protein uS19 (93 aa).

This sequence belongs to the universal ribosomal protein uS19 family.

Protein S19 forms a complex with S13 that binds strongly to the 16S ribosomal RNA. In Ligilactobacillus salivarius (strain UCC118) (Lactobacillus salivarius), this protein is Small ribosomal subunit protein uS19.